The following is a 791-amino-acid chain: Nuclear cap-binding protein subunit 1 (791 aa).

A compositionally biased stretch (basic and acidic residues) spans 1 to 14 (MSRRRHSDENDGGP). A disordered region spans residues 1–24 (MSRRRHSDENDGGPHHKRRKTSEP). The 213-residue stretch at 28-240 (EDRLESLICR…CLWAQIQKLK (213 aa)) folds into the MIF4G domain. The stretch at 641–714 (LHSTIRKMNK…SEQKNLFLVI (74 aa)) forms a coiled coil. The disordered stretch occupies residues 668–687 (KQHKHRDSDDNDEDSGRKDG).

It belongs to the NCBP1 family. Component of the nuclear cap-binding complex (CBC), a heterodimer composed of ncbp1/cbp80 and ncbp2/cbp20 that interacts with m7GpppG-capped RNA. Component of an alternative nuclear cap-binding complex (CBC) composed of ncbp1/cbp80 and ncbp3.

It is found in the nucleus. Its subcellular location is the cytoplasm. In terms of biological role, component of the cap-binding complex (CBC), which binds cotranscriptionally to the 5'-cap of pre-mRNAs and is involved in various processes such as pre-mRNA splicing, translation regulation, nonsense-mediated mRNA decay, RNA-mediated gene silencing (RNAi) by microRNAs (miRNAs) and mRNA export. The CBC complex is involved in mRNA export from the nucleus, leading to the recruitment of the mRNA export machinery to the 5'-end of mRNA and to mRNA export in a 5' to 3' direction through the nuclear pore. The CBC complex is also involved in mediating U snRNA and intronless mRNAs export from the nucleus. The CBC complex is essential for a pioneer round of mRNA translation, before steady state translation when the CBC complex is replaced by cytoplasmic cap-binding protein eIF4E. The pioneer round of mRNA translation mediated by the CBC complex plays a central role in nonsense-mediated mRNA decay (NMD), NMD only taking place in mRNAs bound to the CBC complex, but not on eIF4E-bound mRNAs. The CBC complex enhances NMD in mRNAs containing at least one exon-junction complex (EJC), promoting the interaction between UPF1 and UPF2. The CBC complex is also involved in 'failsafe' NMD, which is independent of the EJC complex, while it does not participate in Staufen-mediated mRNA decay (SMD). During cell proliferation, the CBC complex is also involved in microRNAs (miRNAs) biogenesis via its interaction with SRRT/ARS2 and is required for miRNA-mediated RNA interference. The CBC complex also acts as a negative regulator of parn, thereby acting as an inhibitor of mRNA deadenylation. In the CBC complex, ncbp1/cbp80 does not bind directly capped RNAs (m7GpppG-capped RNA) but is required to stabilize the movement of the N-terminal loop of ncbp2/cbp20 and lock the CBC into a high affinity cap-binding state with the cap structure. Associates with NCBP3 to form an alternative cap-binding complex (CBC) which plays a key role in mRNA export. The conventional CBC with NCBP2 binds both small nuclear RNA (snRNA) and messenger (mRNA) and is involved in their export from the nucleus whereas the alternative CBC with NCBP3 does not bind snRNA and associates only with mRNA thereby playing a role only in mRNA export. The chain is Nuclear cap-binding protein subunit 1 (ncbp1) from Xenopus tropicalis (Western clawed frog).